We begin with the raw amino-acid sequence, 287 residues long: ATP synthase gamma chain (287 aa).

It belongs to the ATPase gamma chain family. In terms of assembly, F-type ATPases have 2 components, CF(1) - the catalytic core - and CF(0) - the membrane proton channel. CF(1) has five subunits: alpha(3), beta(3), gamma(1), delta(1), epsilon(1). CF(0) has three main subunits: a, b and c.

Its subcellular location is the cell inner membrane. In terms of biological role, produces ATP from ADP in the presence of a proton gradient across the membrane. The gamma chain is believed to be important in regulating ATPase activity and the flow of protons through the CF(0) complex. This Geobacter sp. (strain M21) protein is ATP synthase gamma chain.